The primary structure comprises 74 residues: Protein WFDC9 (74 aa).

Residues 1-19 (MKFWILLLTVSAHGIVVFL) form the signal peptide.

Its subcellular location is the secreted. The polypeptide is Protein WFDC9 (Wfdc9) (Rattus norvegicus (Rat)).